Reading from the N-terminus, the 237-residue chain is Ribosomal RNA small subunit methyltransferase G (237 aa).

S-adenosyl-L-methionine is bound by residues glycine 78, phenylalanine 83, alanine 129–glutamate 130, and arginine 148.

Belongs to the methyltransferase superfamily. RNA methyltransferase RsmG family.

It localises to the cytoplasm. Its function is as follows. Specifically methylates the N7 position of a guanine in 16S rRNA. This is Ribosomal RNA small subunit methyltransferase G from Streptococcus pyogenes serotype M18 (strain MGAS8232).